Here is a 97-residue protein sequence, read N- to C-terminus: Integration host factor subunit alpha (97 aa).

The protein belongs to the bacterial histone-like protein family. As to quaternary structure, heterodimer of an alpha and a beta chain.

Functionally, this protein is one of the two subunits of integration host factor, a specific DNA-binding protein that functions in genetic recombination as well as in transcriptional and translational control. The chain is Integration host factor subunit alpha from Hydrogenovibrio crunogenus (strain DSM 25203 / XCL-2) (Thiomicrospira crunogena).